The sequence spans 323 residues: MGGQVSASNSFSRLHCRNANEDWMSALCPRLWDVPLHHLSIPGSHDTMTYCLNKKSPISHEESRLLQLLNKALPCITRPVVLKWSVTQALDVTEQLDAGVRYLDLRIAHMLEGSEKNLHFVHMVYTTALVEDTLTEISEWLERHPREVVILACRNFEGLSEDLHEYLVACIKNIFGDMLCPRGEVPTLRQLWSRGQQVIVSYEDESSLRRHHELWPGVPYWWGNRVKTEALIRYLETMKSCGRPGGLFVAGINLTENLQYVLAHPSESLEKMTLPNLPRLSAWVREQCPGPGSRCTNIIAGDFIGADGFVSDVIALNQKLLWC.

A PI-PLC X-box domain is found at 30 to 206; sequence RLWDVPLHHL…QVIVSYEDES (177 aa).

Widely expressed.

The protein localises to the cytoplasm. The chain is PI-PLC X domain-containing protein 1 (PLCXD1) from Homo sapiens (Human).